Consider the following 771-residue polypeptide: Probable dipeptidyl peptidase 4 (771 aa).

The N-terminal stretch at 1 to 16 (MKYSKLLLLLVSVVQA) is a signal peptide. Asn37, Asn80, Asn114, Asn173, Asn222, Asn470, and Asn495 each carry an N-linked (GlcNAc...) asparagine glycan. Active-site charge relay system residues include Ser618, Asp695, and His730.

The protein belongs to the peptidase S9B family.

Its subcellular location is the secreted. The catalysed reaction is Release of an N-terminal dipeptide, Xaa-Yaa-|-Zaa-, from a polypeptide, preferentially when Yaa is Pro, provided Zaa is neither Pro nor hydroxyproline.. In terms of biological role, extracellular dipeptidyl-peptidase which removes N-terminal dipeptides sequentially from polypeptides having unsubstituted N-termini provided that the penultimate residue is proline. This Aspergillus flavus (strain ATCC 200026 / FGSC A1120 / IAM 13836 / NRRL 3357 / JCM 12722 / SRRC 167) protein is Probable dipeptidyl peptidase 4 (dpp4).